The chain runs to 162 residues: Universal stress protein MJ0577 (162 aa).

Residues P11, V41, G127–N133, and S141–T143 each bind ATP.

Belongs to the universal stress protein A family. Homodimer. Mn(2+) is required as a cofactor.

Its subcellular location is the cytoplasm. The sequence is that of Universal stress protein MJ0577 from Methanocaldococcus jannaschii (strain ATCC 43067 / DSM 2661 / JAL-1 / JCM 10045 / NBRC 100440) (Methanococcus jannaschii).